Consider the following 109-residue polypeptide: Hainantoxin-XVIII (109 aa).

The signal sequence occupies residues 1–18; that stretch reads MKLSIIIIATSLVIAVVA. The propeptide occupies 19–46; that stretch reads FPSKDSKAIENDKTEQRMEIVVQETARA. 4 disulfides stabilise this stretch: Cys47/Cys62, Cys55/Cys68, Cys59/Cys108, and Cys61/Cys81.

This sequence belongs to the neurotoxin 25 family. F7 subfamily. Expressed by the venom gland.

It localises to the secreted. Putative ion channel inhibitor. This chain is Hainantoxin-XVIII, found in Cyriopagopus hainanus (Chinese bird spider).